Reading from the N-terminus, the 144-residue chain is MADRLTQLQDAVNSLADQFCNAIGVLQQCGPPASFSNIQTAINKDQPANPTEEYAQLFAALIARTAKDIDVLIDSLPSEESTAALQAASLYKLEEENHEAATCLEDVVYRGDMLLEKIQSALADIAQSQLKTRSGSHSQSLPDS.

It belongs to the Mediator complex subunit 21 family. As to quaternary structure, component of the Mediator complex, which is composed of MED1, MED4, MED6, MED7, MED8, MED9, MED10, MED11, MED12, MED13, MED13L, MED14, MED15, MED16, MED17, MED18, MED19, MED20, MED21, MED22, MED23, MED24, MED25, MED26, MED27, MED29, MED30, MED31, CCNC, CDK8 and CDC2L6/CDK11. The MED12, MED13, CCNC and CDK8 subunits form a distinct module termed the CDK8 module. Mediator containing the CDK8 module is less active than Mediator lacking this module in supporting transcriptional activation. Individual preparations of the Mediator complex lacking one or more distinct subunits have been variously termed ARC, CRSP, DRIP, PC2, SMCC and TRAP. Interacts with PPARG. Interacts with THRA in a ligand-dependent fashion.

The protein resides in the nucleus. Component of the Mediator complex, a coactivator involved in the regulated transcription of nearly all RNA polymerase II-dependent genes. Mediator functions as a bridge to convey information from gene-specific regulatory proteins to the basal RNA polymerase II transcription machinery. Mediator is recruited to promoters by direct interactions with regulatory proteins and serves as a scaffold for the assembly of a functional preinitiation complex with RNA polymerase II and the general transcription factors. The polypeptide is Mediator of RNA polymerase II transcription subunit 21 (MED21) (Macaca fascicularis (Crab-eating macaque)).